The primary structure comprises 89 residues: Large ribosomal subunit protein bL31B (89 aa).

This sequence belongs to the bacterial ribosomal protein bL31 family. Type B subfamily. As to quaternary structure, part of the 50S ribosomal subunit.

This is Large ribosomal subunit protein bL31B from Aeromonas hydrophila subsp. hydrophila (strain ATCC 7966 / DSM 30187 / BCRC 13018 / CCUG 14551 / JCM 1027 / KCTC 2358 / NCIMB 9240 / NCTC 8049).